The primary structure comprises 319 residues: Acetyl-coenzyme A carboxylase carboxyl transferase subunit alpha (319 aa).

In terms of domain architecture, CoA carboxyltransferase C-terminal spans 39–293 (RLQKKSNDLT…KAVLEKQLHE (255 aa)).

It belongs to the AccA family. As to quaternary structure, acetyl-CoA carboxylase is a heterohexamer composed of biotin carboxyl carrier protein (AccB), biotin carboxylase (AccC) and two subunits each of ACCase subunit alpha (AccA) and ACCase subunit beta (AccD).

Its subcellular location is the cytoplasm. It catalyses the reaction N(6)-carboxybiotinyl-L-lysyl-[protein] + acetyl-CoA = N(6)-biotinyl-L-lysyl-[protein] + malonyl-CoA. It participates in lipid metabolism; malonyl-CoA biosynthesis; malonyl-CoA from acetyl-CoA: step 1/1. Functionally, component of the acetyl coenzyme A carboxylase (ACC) complex. First, biotin carboxylase catalyzes the carboxylation of biotin on its carrier protein (BCCP) and then the CO(2) group is transferred by the carboxyltransferase to acetyl-CoA to form malonyl-CoA. The protein is Acetyl-coenzyme A carboxylase carboxyl transferase subunit alpha of Neisseria meningitidis serogroup A / serotype 4A (strain DSM 15465 / Z2491).